We begin with the raw amino-acid sequence, 325 residues long: Aldo-keto reductase family 1 member A1 (325 aa).

N-acetylalanine is present on A2. S4 is modified (phosphoserine). Residues 11–20 (GQKMPLIGLG), T21, and W22 each bind NADP(+). Residue S38 is modified to Phosphoserine. D45 contributes to the NADP(+) binding site. Catalysis depends on Y50, which acts as the Proton donor. N6-acetyllysine; alternate is present on K127. K127 is subject to N6-succinyllysine; alternate. K145 carries the N6-succinyllysine modification. S162, N163, S211, L213, S215, S216, K263, S264, I265, T266, R269, Q272, and N273 together coordinate NADP(+). S211 bears the Phosphoserine mark.

Belongs to the aldo/keto reductase family.

Its subcellular location is the cytoplasm. The protein resides in the cytosol. It localises to the apical cell membrane. The enzyme catalyses a primary alcohol + NADP(+) = an aldehyde + NADPH + H(+). It carries out the reaction L-gulonate + NADP(+) = aldehydo-D-glucuronate + NADPH + H(+). It catalyses the reaction L-gulono-1,4-lactone + NADP(+) = D-glucurono-3,6-lactone + NADPH + H(+). The catalysed reaction is allyl alcohol + NADP(+) = acrolein + NADPH + H(+). The enzyme catalyses glycerol + NADP(+) = D-glyceraldehyde + NADPH + H(+). It carries out the reaction glycerol + NADP(+) = L-glyceraldehyde + NADPH + H(+). It catalyses the reaction hydroxyacetone + NADP(+) = methylglyoxal + NADPH + H(+). The catalysed reaction is 3-deoxyfructose + NADP(+) = 3-deoxyglucosone + NADPH + H(+). The enzyme catalyses (R)-mevalonate + NADP(+) = (R)-mevaldate + NADPH + H(+). It carries out the reaction pyridine 3-methanol + NADP(+) = pyridine-3-carbaldehyde + NADPH + H(+). It catalyses the reaction S-nitroso-CoA + NADPH + H(+) = sulfinamide-CoA + NADP(+). The catalysed reaction is S-nitrosoglutathione + NADPH + H(+) = S-(hydroxysulfenamide)glutathione + NADP(+). Functionally, catalyzes the NADPH-dependent reduction of a wide variety of carbonyl-containing compounds to their corresponding alcohols. Displays enzymatic activity towards endogenous metabolites such as aromatic and aliphatic aldehydes, ketones, monosaccharides and bile acids, with a preference for negatively charged substrates, such as glucuronate and succinic semialdehyde. Functions as a detoxifiying enzyme by reducing a range of toxic aldehydes. Reduces methylglyoxal and 3-deoxyglucosone, which are present at elevated levels under hyperglycemic conditions and are cytotoxic. Involved also in the detoxification of lipid-derived aldehydes like acrolein. Plays a role in the activation of procarcinogens, such as polycyclic aromatic hydrocarbon trans-dihydrodiols, and in the metabolism of various xenobiotics and drugs. Also acts as an inhibitor of protein S-nitrosylation by mediating degradation of S-nitroso-coenzyme A (S-nitroso-CoA), a cofactor required to S-nitrosylate proteins. S-nitroso-CoA reductase activity is involved in reprogramming intermediary metabolism in renal proximal tubules, notably by inhibiting protein S-nitrosylation of isoform 2 of PKM (PKM2). Also acts as a S-nitroso-glutathione reductase by catalyzing the NADPH-dependent reduction of S-nitrosoglutathione. Displays no reductase activity towards retinoids. This chain is Aldo-keto reductase family 1 member A1 (AKR1A1), found in Pongo abelii (Sumatran orangutan).